Reading from the N-terminus, the 576-residue chain is MNIQALLSEKVSQALTAAGAPADSEAQIRQSAKAQFGDYQANGVMAVAKKLGMPPRQLAEKVVQLLALEGIAEKTEIAGPGFINIFLDKQWVASQVENALNAPKLGLTPVEPQTIVIDYSAPNVAKEMHVGHLRSTIIGDAAARTLEFLGHNVIRANHVGDWGTQFGMLIAYLEKMQNENASEMDLSDLEAFYREAKKHYDDDADFAERARGYVVKLQGGDEYCRQMWRKLVDITMTQNQINYERLNVTLTKQDVMGESLYNSMLPGIVADLKAKGLAVESEGATVVFLDEYKNKEGEPMGVIIQKKDGGYLYTTTDIACAKYRYETLNADRVLYYIDSRQHQHLMQAWTIVRKAGYVPDSVSLEHHMFGMMLGKDGKPFKTRAGGTIKLSELLDEAYDRALKLIAEKNPQMESDELSALAKVVSIGAIKYADLSKSRTTDYVFDWDNMLAFEGNTAPYMQYAYTRVASIFKRAGIQEDSLTQPITLSDEREFALATRLLQFEETITSVAREGTPHVMCSYLYDLAGLFSGFYEHCPILNAESDDVRQSRLRLALLTAKTLKQGLDTLGIETVEKM.

Positions 122–132 (PNVAKEMHVGH) match the 'HIGH' region motif.

The protein belongs to the class-I aminoacyl-tRNA synthetase family. Monomer.

The protein resides in the cytoplasm. It carries out the reaction tRNA(Arg) + L-arginine + ATP = L-arginyl-tRNA(Arg) + AMP + diphosphate. The polypeptide is Arginine--tRNA ligase (Pectobacterium carotovorum subsp. carotovorum (strain PC1)).